The primary structure comprises 138 residues: Cysteine desulfuration protein SufE (138 aa).

Residue Cys-51 is the Cysteine persulfide intermediate of the active site.

It belongs to the SufE family. In terms of assembly, homodimer. Interacts with SufS.

It localises to the cytoplasm. Its pathway is cofactor biosynthesis; iron-sulfur cluster biosynthesis. Functionally, participates in cysteine desulfuration mediated by SufS. Cysteine desulfuration mobilizes sulfur from L-cysteine to yield L-alanine and constitutes an essential step in sulfur metabolism for biosynthesis of a variety of sulfur-containing biomolecules. Functions as a sulfur acceptor for SufS, by mediating the direct transfer of the sulfur atom from the S-sulfanylcysteine of SufS, an intermediate product of cysteine desulfuration process. The chain is Cysteine desulfuration protein SufE from Salmonella agona (strain SL483).